We begin with the raw amino-acid sequence, 1063 residues long: Cobalt-zinc-cadmium resistance protein CzcA (1063 aa).

12 helical membrane-spanning segments follow: residues 14-34, 350-370, 371-391, 395-415, 452-472, 487-507, 534-554, 883-903, 906-926, 937-957, 981-1001, and 1013-1033; these read WLVLLAVFGMAGLGIFSYNRL, GAVLVIVILFLFLGNIRAALI, TATIIPLAMLFTFTGMVNYKI, LMSLGALDFGIIIDGAVVIVE, LIFGQLIIMIVYLPIFALTGV, ALLGAMILSVTFVPAAVALFI, LANTAVVLTFAAVSIVLCVAI, VVVPVALLLVFVLLFAMFNNI, GLLVFTGIPFALTGGILALWI, VGFIALCGVAVLNGLVMLSFI, PVLMTALVASLGFVPMAIATG, and VVIGGILSSTALTLLVLPVLY. The disordered stretch occupies residues 1040-1063; sequence DEDAEDTREPVTQTHQPDQGRQPA. The span at 1049–1063 shows a compositional bias: polar residues; that stretch reads PVTQTHQPDQGRQPA.

This sequence belongs to the resistance-nodulation-cell division (RND) (TC 2.A.6) family.

The protein localises to the cell inner membrane. Functionally, has a low cation transport activity for cobalt, it is essential for the expression of cobalt, zinc, and cadmium resistance. CzcA and CzcB together would act in zinc efflux nearly as effectively as the complete CZC efflux system (CzcABC). The polypeptide is Cobalt-zinc-cadmium resistance protein CzcA (czcA) (Cupriavidus metallidurans (strain ATCC 43123 / DSM 2839 / NBRC 102507 / CH34) (Ralstonia metallidurans)).